The chain runs to 246 residues: tRNA (guanine-N(1)-)-methyltransferase (246 aa).

S-adenosyl-L-methionine contacts are provided by residues glycine 112 and 131 to 136 (IGDYVL).

The protein belongs to the RNA methyltransferase TrmD family. As to quaternary structure, homodimer.

It localises to the cytoplasm. It catalyses the reaction guanosine(37) in tRNA + S-adenosyl-L-methionine = N(1)-methylguanosine(37) in tRNA + S-adenosyl-L-homocysteine + H(+). In terms of biological role, specifically methylates guanosine-37 in various tRNAs. This Fervidobacterium nodosum (strain ATCC 35602 / DSM 5306 / Rt17-B1) protein is tRNA (guanine-N(1)-)-methyltransferase.